A 475-amino-acid polypeptide reads, in one-letter code: D(1B) dopamine receptor (475 aa).

Residues 1–38 (MLPPGRNRTAQPARLGLQRQLAQVDAPAGSATPLGPAQ) lie on the Extracellular side of the membrane. Residue Asn7 is glycosylated (N-linked (GlcNAc...) asparagine). The helical transmembrane segment at 39 to 64 (VVTAGLLTLLIVWTLLGNVLVCAAIV) threads the bilayer. The Cytoplasmic segment spans residues 65 to 75 (RSRHLRAKMTN). The helical transmembrane segment at 76 to 102 (IFIVSLAVSDLFVALLVMPWKAVAEVA) threads the bilayer. Over 103–111 (GYWPFGTFC) the chain is Extracellular. Cys111 and Cys211 are joined by a disulfide. A helical membrane pass occupies residues 112–134 (DIWVAFDIMCSTASILNLCIISV). Over 135–153 (DRYWAISRPFRYERKMTQR) the chain is Cytoplasmic. The helical transmembrane segment at 154 to 179 (VALVMVGLAWTLSILISFIPVQLNWH) threads the bilayer. Residues 180–215 (RDKAGSQGQEGLLSNGTPWEEGWELEGRTENCDSSL) lie on the Extracellular side of the membrane. The chain crosses the membrane as a helical span at residues 216 to 240 (NRTYAISSSLISFYIPVAIMIVTYT). The Cytoplasmic portion of the chain corresponds to 241–289 (RIYRIAQVQIRRISSLERAAEHAQSCRSRGAYEPDPSLRASIKKETKVF). Residues 290 to 317 (KTLSMIMGVFVCCWLPFFILNCMVPFCS) form a helical membrane-spanning segment. Over 318–335 (SGDAEGPKTGFPCVSETT) the chain is Extracellular. A helical membrane pass occupies residues 336 to 357 (FDIFVWFGWANSSLNPIIYAFN). Topologically, residues 358 to 475 (ADFRKVFAQL…LTPNCFDKTA (118 aa)) are cytoplasmic. A lipid anchor (S-palmitoyl cysteine) is attached at Cys370. The segment at 415–443 (SGDREVGEEEEEGPFDHMSQISPTTPDGD) is disordered.

This sequence belongs to the G-protein coupled receptor 1 family. As to expression, brain, in the lateral mammillary nuclei, the anterior pretectal nuclei, and several layers of the hippocampus.

It is found in the cell membrane. Functionally, dopamine receptor whose activity is mediated by G proteins which activate adenylyl cyclase. This is D(1B) dopamine receptor (Drd5) from Rattus norvegicus (Rat).